The primary structure comprises 395 residues: S-adenosylmethionine synthase (395 aa).

ATP is bound at residue His-18. Asp-20 serves as a coordination point for Mg(2+). Glu-46 contacts K(+). L-methionine is bound by residues Glu-59 and Gln-103. A flexible loop region spans residues Gln-103 to Ser-113. ATP is bound by residues Asp-170–Lys-172, Asp-244, Arg-250–Lys-251, Ala-267, and Lys-271. Asp-244 is a binding site for L-methionine. Lys-275 serves as a coordination point for L-methionine.

Belongs to the AdoMet synthase family. As to quaternary structure, homotetramer; dimer of dimers. It depends on Mg(2+) as a cofactor. K(+) serves as cofactor.

The protein localises to the cytoplasm. The enzyme catalyses L-methionine + ATP + H2O = S-adenosyl-L-methionine + phosphate + diphosphate. It functions in the pathway amino-acid biosynthesis; S-adenosyl-L-methionine biosynthesis; S-adenosyl-L-methionine from L-methionine: step 1/1. Catalyzes the formation of S-adenosylmethionine (AdoMet) from methionine and ATP. The overall synthetic reaction is composed of two sequential steps, AdoMet formation and the subsequent tripolyphosphate hydrolysis which occurs prior to release of AdoMet from the enzyme. The protein is S-adenosylmethionine synthase of Gluconacetobacter diazotrophicus (strain ATCC 49037 / DSM 5601 / CCUG 37298 / CIP 103539 / LMG 7603 / PAl5).